Reading from the N-terminus, the 541-residue chain is Solute carrier family 2, facilitated glucose transporter member 10 (541 aa).

Residues 1 to 15 (MGHSPPVLPLCASVS) are Cytoplasmic-facing. A helical transmembrane segment spans residues 16-36 (LLGGLTFGYELAVISGALLPL). Residues 37–48 (QLDFGLSCLEQE) lie on the Extracellular side of the membrane. A helical membrane pass occupies residues 49–69 (FLVGSLLLGALLASLVGGFLI). The Cytoplasmic portion of the chain corresponds to 70–77 (DCYGRKQA). The chain crosses the membrane as a helical span at residues 78-98 (ILGSNLVLLAGSLTLGLAGSL). At 99–106 (AWLVLGRA) the chain is on the extracellular side. A helical transmembrane segment spans residues 107 to 127 (VVGFAISLSSMACCIYVSELV). Residues 128–134 (GPRQRGV) are Cytoplasmic-facing. A helical transmembrane segment spans residues 135 to 155 (LVSLYEAGITVGILLSYALNY). The Extracellular portion of the chain corresponds to 156–166 (ALAGTPWGWRH). A helical membrane pass occupies residues 167-187 (MFGWATAPAVLQSLSLLFLPA). Over 188–233 (GTDETATHKDLIPLQGGEAPKLGPGRPRYSFLDLFRARDNMRGRTT) the chain is Cytoplasmic. Residues 234 to 254 (VGLGLVLFQQLTGQPNVLCYA) traverse the membrane as a helical segment. 242-243 (QQ) contributes to the D-glucose binding site. Topologically, residues 255-269 (STIFSSVGFHGGSSA) are extracellular. Residues 270–290 (VLASVGLGAVKVAATLTAMGL) form a helical membrane-spanning segment. The Cytoplasmic segment spans residues 291 to 298 (VDRAGRRA). Residues 299 to 319 (LLLAGCALMALSVSGIGLVSF) form a helical membrane-spanning segment. Topologically, residues 320–414 (AVPMDSGPSC…HALLRWTALL (95 aa)) are extracellular. N-linked (GlcNAc...) asparagine glycosylation is present at asparagine 334. The interval 340–388 (GLPGDSGLLQDSSLPPIPRTNEDQREPILSTAKKTKPHPRSGDPSAPPR) is disordered. A helical membrane pass occupies residues 415–435 (CLMVFVSAFSFGFGPVTWLVL). Tryptophan 432 contacts D-glucose. Residues 436–445 (SEIYPVEIRG) are Cytoplasmic-facing. A helical membrane pass occupies residues 446 to 466 (RAFAFCNSFNWAANLFISLSF). The Extracellular segment spans residues 467–476 (LDLIGTIGLS). The chain crosses the membrane as a helical span at residues 477–497 (WTFLLYGLTAVLGLGFIYLFV). At 498–541 (PETKGQSLAEIDQQFQKRRFTLSFGHRQNSTGIPYSRIEISAAS) the chain is on the cytoplasmic side.

This sequence belongs to the major facilitator superfamily. Sugar transporter (TC 2.A.1.1) family. Glucose transporter subfamily. Widely expressed; highest levels in liver and pancreas.

Its subcellular location is the endomembrane system. It localises to the cytoplasm. The protein resides in the perinuclear region. It carries out the reaction D-glucose(out) = D-glucose(in). Its function is as follows. Facilitative glucose transporter required for the development of the cardiovascular system. The protein is Solute carrier family 2, facilitated glucose transporter member 10 of Homo sapiens (Human).